Reading from the N-terminus, the 426-residue chain is Serine--tRNA ligase (426 aa).

233 to 235 (TAE) lines the L-serine pocket. Residue 264 to 266 (RSE) coordinates ATP. Glu287 contributes to the L-serine binding site. 351–354 (EISS) serves as a coordination point for ATP. Position 387 (Ser387) interacts with L-serine.

The protein belongs to the class-II aminoacyl-tRNA synthetase family. Type-1 seryl-tRNA synthetase subfamily. In terms of assembly, homodimer. The tRNA molecule binds across the dimer.

The protein resides in the cytoplasm. It catalyses the reaction tRNA(Ser) + L-serine + ATP = L-seryl-tRNA(Ser) + AMP + diphosphate + H(+). The catalysed reaction is tRNA(Sec) + L-serine + ATP = L-seryl-tRNA(Sec) + AMP + diphosphate + H(+). It participates in aminoacyl-tRNA biosynthesis; selenocysteinyl-tRNA(Sec) biosynthesis; L-seryl-tRNA(Sec) from L-serine and tRNA(Sec): step 1/1. Catalyzes the attachment of serine to tRNA(Ser). Is also able to aminoacylate tRNA(Sec) with serine, to form the misacylated tRNA L-seryl-tRNA(Sec), which will be further converted into selenocysteinyl-tRNA(Sec). The polypeptide is Serine--tRNA ligase (Clostridium botulinum (strain Kyoto / Type A2)).